The chain runs to 177 residues: MSRTNISALSPMQKLARNPAVIAMTLALALAGCANKKNMPNSAGELGLGGAGSATPGSQQDFTVNVGDRIFFDTDSTSIRADAQQTLQRQAQWLSRYPNYAITVEGHADERGTREYNLALGARRAAATRDFLASQGVPASRMKTISYGKEKPVAVCDDISCWSQNRRAVTVLGGAGM.

An N-terminal signal peptide occupies residues 1–32 (MSRTNISALSPMQKLARNPAVIAMTLALALAG). C33 carries the N-palmitoyl cysteine lipid modification. C33 is lipidated: S-diacylglycerol cysteine. Residues 59–176 (QQDFTVNVGD…RAVTVLGGAG (118 aa)) enclose the OmpA-like domain.

This sequence belongs to the Pal lipoprotein family. As to quaternary structure, the Tol-Pal system is composed of five core proteins: the inner membrane proteins TolA, TolQ and TolR, the periplasmic protein TolB and the outer membrane protein Pal. They form a network linking the inner and outer membranes and the peptidoglycan layer.

The protein localises to the cell outer membrane. Functionally, part of the Tol-Pal system, which plays a role in outer membrane invagination during cell division and is important for maintaining outer membrane integrity. The sequence is that of Peptidoglycan-associated lipoprotein from Agrobacterium fabrum (strain C58 / ATCC 33970) (Agrobacterium tumefaciens (strain C58)).